The following is a 150-amino-acid chain: Dual specificity protein phosphatase 23 (150 aa).

One can recognise a Tyrosine-protein phosphatase domain in the interval 7–150; sequence NFSWVLPGRL…AVFQFYQRTK (144 aa). Residue C95 is the Phosphocysteine intermediate of the active site.

This sequence belongs to the protein-tyrosine phosphatase family. Non-receptor class dual specificity subfamily. In terms of tissue distribution, widely expressed.

The protein localises to the cytoplasm. Its subcellular location is the cytosol. The protein resides in the nucleus. The enzyme catalyses O-phospho-L-tyrosyl-[protein] + H2O = L-tyrosyl-[protein] + phosphate. It catalyses the reaction O-phospho-L-seryl-[protein] + H2O = L-seryl-[protein] + phosphate. It carries out the reaction O-phospho-L-threonyl-[protein] + H2O = L-threonyl-[protein] + phosphate. Its function is as follows. Protein phosphatase that mediates dephosphorylation of proteins phosphorylated on Tyr and Ser/Thr residues. In vitro, it can dephosphorylate p44-ERK1 (MAPK3) but not p54 SAPK-beta (MAPK10) in vitro. Able to enhance activation of JNK and p38 (MAPK14). The sequence is that of Dual specificity protein phosphatase 23 (Dusp23) from Mus musculus (Mouse).